Consider the following 421-residue polypeptide: MSKTHLTEQKFSDFALHPVVVQALEKKGFYNCTPIQALALPLTLAGRDVAGQAQTGTGKTMAFLTSTFHYLLSHPAAENRQVNQPRALIMAPTRELAVQIHSDAEPLAEATGIKLGLAYGGDGYDKQLKVLESGVDILIGTTGRLIDYTKQNHVNLGAIQVVVLDEADRMYDLGFIKDIRWLFRRMPAATERLNMLFSATLSYRVRELAFEQMNNAEYVEVEPEQKTGHRIKEELFYPSNEEKMRLLQTLIEEEWPDRAIIFANTKHRCEDIWGHLAADGHRVGLLTGDVAQKKRLRILDEFTRGDLDILVATDVAARGLHIPAVTHVFNYDLPDDCEDYVHRIGRTGRAGASGHSISLACEEYALNLPAIETYIGHSIPVSKYNPDALLSELPPPKRLSRPRTGNGPRRSGAPRNRRRTG.

Positions glutamine 9–alanine 37 match the Q motif motif. Positions leucine 40–valine 219 constitute a Helicase ATP-binding domain. An ATP-binding site is contributed by alanine 53–threonine 60. Residues aspartate 165–aspartate 168 carry the DEAD box motif. Residues arginine 245–leucine 390 form the Helicase C-terminal domain. Positions leucine 390–glycine 421 are disordered. Residues glycine 405 to proline 414 are compositionally biased toward low complexity.

This sequence belongs to the DEAD box helicase family. RhlB subfamily. In terms of assembly, component of the RNA degradosome, which is a multiprotein complex involved in RNA processing and mRNA degradation.

The protein resides in the cytoplasm. The catalysed reaction is ATP + H2O = ADP + phosphate + H(+). DEAD-box RNA helicase involved in RNA degradation. Has RNA-dependent ATPase activity and unwinds double-stranded RNA. This chain is ATP-dependent RNA helicase RhlB, found in Cronobacter sakazakii (strain ATCC BAA-894) (Enterobacter sakazakii).